The sequence spans 265 residues: Secreted RxLR effector protein 146 (265 aa).

The N-terminal stretch at 1-25 (MRYYTQVVAASLVATLAVVDSIVFA) is a signal peptide. Positions 32-50 (RFLRQDGATVTRGGKGEER) match the RxLR-dEER motif. N-linked (GlcNAc...) asparagine glycans are attached at residues asparagine 71 and asparagine 148.

Belongs to the RxLR effector family.

The protein localises to the secreted. Its subcellular location is the host nucleus. It localises to the host cytoplasm. Its function is as follows. Secreted effector that completely suppresses the host cell death induced by cell death-inducing proteins. The protein is Secreted RxLR effector protein 146 of Plasmopara viticola (Downy mildew of grapevine).